Here is a 260-residue protein sequence, read N- to C-terminus: Neuraminyllactose-binding hemagglutinin (260 aa).

An N-terminal signal peptide occupies residues Met1–Gly27. Cys28 is lipidated: N-palmitoyl cysteine. Cys28 is lipidated: S-diacylglycerol cysteine. An N-acetyl-neuraminyl-alpha(2,3)-lactose binding motif region spans residues Lys134–Lys139.

It is found in the cell outer membrane. The polypeptide is Neuraminyllactose-binding hemagglutinin (hpaA) (Helicobacter pylori (Campylobacter pylori)).